A 292-amino-acid polypeptide reads, in one-letter code: Acetyl-coenzyme A carboxylase carboxyl transferase subunit beta (292 aa).

The CoA carboxyltransferase N-terminal domain occupies 36–292 (MWSKCEKCAK…LLRMHEVDYE (257 aa)). Cysteine 40, cysteine 43, cysteine 59, and cysteine 62 together coordinate Zn(2+). The C4-type zinc finger occupies 40–62 (CEKCAKILYTEDLRENFNVCPNC).

It belongs to the AccD/PCCB family. As to quaternary structure, acetyl-CoA carboxylase is a heterohexamer composed of biotin carboxyl carrier protein (AccB), biotin carboxylase (AccC) and two subunits each of ACCase subunit alpha (AccA) and ACCase subunit beta (AccD). Zn(2+) serves as cofactor.

It is found in the cytoplasm. It catalyses the reaction N(6)-carboxybiotinyl-L-lysyl-[protein] + acetyl-CoA = N(6)-biotinyl-L-lysyl-[protein] + malonyl-CoA. Its pathway is lipid metabolism; malonyl-CoA biosynthesis; malonyl-CoA from acetyl-CoA: step 1/1. Component of the acetyl coenzyme A carboxylase (ACC) complex. Biotin carboxylase (BC) catalyzes the carboxylation of biotin on its carrier protein (BCCP) and then the CO(2) group is transferred by the transcarboxylase to acetyl-CoA to form malonyl-CoA. The chain is Acetyl-coenzyme A carboxylase carboxyl transferase subunit beta from Clostridium perfringens (strain ATCC 13124 / DSM 756 / JCM 1290 / NCIMB 6125 / NCTC 8237 / Type A).